A 375-amino-acid chain; its full sequence is Alcohol dehydrogenase 1B (375 aa).

The residue at position 1 (Ser1) is an N-acetylserine. Positions 46, 67, 97, 100, 103, 111, and 174 each coordinate Zn(2+). NAD(+)-binding positions include 199–204 (GLGGVG), Asp223, Lys228, 293–295 (VGV), and Arg370.

This sequence belongs to the zinc-containing alcohol dehydrogenase family. Class-I subfamily. In terms of assembly, multimeric (with different ratios of monomers). Zn(2+) is required as a cofactor.

Its subcellular location is the cytoplasm. The enzyme catalyses a primary alcohol + NAD(+) = an aldehyde + NADH + H(+). The catalysed reaction is a secondary alcohol + NAD(+) = a ketone + NADH + H(+). The polypeptide is Alcohol dehydrogenase 1B (Saara hardwickii (Indian spiny-tailed lizard)).